A 682-amino-acid polypeptide reads, in one-letter code: Potassium-transporting ATPase ATP-binding subunit (682 aa).

4 consecutive transmembrane segments (helical) span residues P34 to V54, I58 to F78, I219 to L239, and V254 to I274. The active-site 4-aspartylphosphate intermediate is D307. ATP-binding positions include D344, E348, F377–S384, and K395. Mg(2+)-binding residues include D518 and D522. 3 helical membrane passes run F588–M608, A616–L636, and L662–A682.

Belongs to the cation transport ATPase (P-type) (TC 3.A.3) family. Type IA subfamily. In terms of assembly, the system is composed of three essential subunits: KdpA, KdpB and KdpC.

It localises to the cell inner membrane. The enzyme catalyses K(+)(out) + ATP + H2O = K(+)(in) + ADP + phosphate + H(+). Part of the high-affinity ATP-driven potassium transport (or Kdp) system, which catalyzes the hydrolysis of ATP coupled with the electrogenic transport of potassium into the cytoplasm. This subunit is responsible for energy coupling to the transport system and for the release of the potassium ions to the cytoplasm. The polypeptide is Potassium-transporting ATPase ATP-binding subunit (Salmonella agona (strain SL483)).